Here is a 176-residue protein sequence, read N- to C-terminus: dCTP deaminase (176 aa).

DCTP contacts are provided by residues 99–104 (RSTLAR) and Asp115. The active-site Proton donor/acceptor is the Glu125. Gln163 is a binding site for dCTP.

This sequence belongs to the dCTP deaminase family. In terms of assembly, homotrimer.

The catalysed reaction is dCTP + H2O + H(+) = dUTP + NH4(+). It functions in the pathway pyrimidine metabolism; dUMP biosynthesis; dUMP from dCTP (dUTP route): step 1/2. Functionally, catalyzes the deamination of dCTP to dUTP. This chain is dCTP deaminase, found in Pyrobaculum islandicum (strain DSM 4184 / JCM 9189 / GEO3).